We begin with the raw amino-acid sequence, 130 residues long: Small ribosomal subunit protein uS17m (130 aa).

It belongs to the universal ribosomal protein uS17 family. Component of the mitochondrial ribosome small subunit (28S) which comprises a 12S rRNA and about 30 distinct proteins.

It localises to the mitochondrion. This is Small ribosomal subunit protein uS17m (MRPS17) from Bos taurus (Bovine).